We begin with the raw amino-acid sequence, 179 residues long: Segregation and condensation protein B (179 aa).

Belongs to the ScpB family. In terms of assembly, homodimer. Homodimerization may be required to stabilize the binding of ScpA to the Smc head domains. Component of a cohesin-like complex composed of ScpA, ScpB and the Smc homodimer, in which ScpA and ScpB bind to the head domain of Smc. The presence of the three proteins is required for the association of the complex with DNA.

It localises to the cytoplasm. Functionally, participates in chromosomal partition during cell division. May act via the formation of a condensin-like complex containing Smc and ScpA that pull DNA away from mid-cell into both cell halves. The polypeptide is Segregation and condensation protein B (Streptococcus equi subsp. equi (strain 4047)).